The chain runs to 129 residues: Small ribosomal subunit protein uS11 (129 aa).

Belongs to the universal ribosomal protein uS11 family. As to quaternary structure, part of the 30S ribosomal subunit. Interacts with proteins S7 and S18. Binds to IF-3.

Functionally, located on the platform of the 30S subunit, it bridges several disparate RNA helices of the 16S rRNA. Forms part of the Shine-Dalgarno cleft in the 70S ribosome. This is Small ribosomal subunit protein uS11 from Mesorhizobium japonicum (strain LMG 29417 / CECT 9101 / MAFF 303099) (Mesorhizobium loti (strain MAFF 303099)).